Reading from the N-terminus, the 192-residue chain is Fe/S biogenesis protein NfuA (192 aa).

[4Fe-4S] cluster contacts are provided by cysteine 150 and cysteine 153.

The protein belongs to the NfuA family. As to quaternary structure, homodimer. Requires [4Fe-4S] cluster as cofactor.

In terms of biological role, involved in iron-sulfur cluster biogenesis. Binds a 4Fe-4S cluster, can transfer this cluster to apoproteins, and thereby intervenes in the maturation of Fe/S proteins. Could also act as a scaffold/chaperone for damaged Fe/S proteins. The polypeptide is Fe/S biogenesis protein NfuA (Vesicomyosocius okutanii subsp. Calyptogena okutanii (strain HA)).